The primary structure comprises 76 residues: Putative snRNP Sm-like protein (76 aa).

One can recognise a Sm domain in the interval 4-76 (RPLDVIHRSL…VLAISPVDIE (73 aa)).

Belongs to the snRNP Sm proteins family.

This chain is Putative snRNP Sm-like protein, found in Thermococcus gammatolerans (strain DSM 15229 / JCM 11827 / EJ3).